A 227-amino-acid chain; its full sequence is Pyridoxine-5'-phosphate oxidase (227 aa).

20–23 (RKDY) serves as a coordination point for pyridoxal 5'-phosphate. Position 75–78 (75–78 (RVVL)) interacts with FMN. Residue Lys-80 participates in pyridoxal 5'-phosphate binding. Residues 90 to 91 (YT), 96 to 97 (RK), and Gln-117 contribute to the FMN site. Tyr-135, Arg-139, and Ser-143 together coordinate pyridoxal 5'-phosphate. Residues 152–153 (FQ) and Trp-197 each bind FMN. 203 to 205 (RIH) is a pyridoxal 5'-phosphate binding site. Arg-207 serves as a coordination point for FMN.

Belongs to the pyridoxamine 5'-phosphate oxidase family. In terms of assembly, homodimer. FMN is required as a cofactor.

The enzyme catalyses pyridoxamine 5'-phosphate + O2 + H2O = pyridoxal 5'-phosphate + H2O2 + NH4(+). It catalyses the reaction pyridoxine 5'-phosphate + O2 = pyridoxal 5'-phosphate + H2O2. Its pathway is cofactor metabolism; pyridoxal 5'-phosphate salvage; pyridoxal 5'-phosphate from pyridoxamine 5'-phosphate: step 1/1. The protein operates within cofactor metabolism; pyridoxal 5'-phosphate salvage; pyridoxal 5'-phosphate from pyridoxine 5'-phosphate: step 1/1. Functionally, catalyzes the oxidation of either pyridoxine 5'-phosphate (PNP) or pyridoxamine 5'-phosphate (PMP) into pyridoxal 5'-phosphate (PLP). This chain is Pyridoxine-5'-phosphate oxidase (pnpo), found in Dictyostelium discoideum (Social amoeba).